The sequence spans 149 residues: Pleckstrin homology domain-containing family J member 1 (149 aa).

Residues 15–108 enclose the PH domain; the sequence is PAEKAAEILM…WIEALKRASY (94 aa).

This is Pleckstrin homology domain-containing family J member 1 (PLEKHJ1) from Gallus gallus (Chicken).